We begin with the raw amino-acid sequence, 493 residues long: Membrane-bound lytic murein transglycosylase F (493 aa).

Residues 1 to 21 form the signal peptide; it reads MKRLRFNYLLIGLITVLLALA. Positions 22 to 268 are non-LT domain; that stretch reads LWPSIPWYGG…RLDEKYLGHV (247 aa). An LT domain region spans residues 269 to 493; it reads GTFDYVDTRT…LNPVSALPLP (225 aa). Residue glutamate 313 is part of the active site.

It in the N-terminal section; belongs to the bacterial solute-binding protein 3 family. In the C-terminal section; belongs to the transglycosylase Slt family.

It is found in the cell outer membrane. It catalyses the reaction Exolytic cleavage of the (1-&gt;4)-beta-glycosidic linkage between N-acetylmuramic acid (MurNAc) and N-acetylglucosamine (GlcNAc) residues in peptidoglycan, from either the reducing or the non-reducing ends of the peptidoglycan chains, with concomitant formation of a 1,6-anhydrobond in the MurNAc residue.. Murein-degrading enzyme that degrades murein glycan strands and insoluble, high-molecular weight murein sacculi, with the concomitant formation of a 1,6-anhydromuramoyl product. Lytic transglycosylases (LTs) play an integral role in the metabolism of the peptidoglycan (PG) sacculus. Their lytic action creates space within the PG sacculus to allow for its expansion as well as for the insertion of various structures such as secretion systems and flagella. The chain is Membrane-bound lytic murein transglycosylase F from Erwinia tasmaniensis (strain DSM 17950 / CFBP 7177 / CIP 109463 / NCPPB 4357 / Et1/99).